Consider the following 247-residue polypeptide: Phosphoribosylaminoimidazole-succinocarboxamide synthase (247 aa).

Belongs to the SAICAR synthetase family.

The catalysed reaction is 5-amino-1-(5-phospho-D-ribosyl)imidazole-4-carboxylate + L-aspartate + ATP = (2S)-2-[5-amino-1-(5-phospho-beta-D-ribosyl)imidazole-4-carboxamido]succinate + ADP + phosphate + 2 H(+). Its pathway is purine metabolism; IMP biosynthesis via de novo pathway; 5-amino-1-(5-phospho-D-ribosyl)imidazole-4-carboxamide from 5-amino-1-(5-phospho-D-ribosyl)imidazole-4-carboxylate: step 1/2. This chain is Phosphoribosylaminoimidazole-succinocarboxamide synthase, found in Prochlorococcus marinus (strain NATL1A).